We begin with the raw amino-acid sequence, 188 residues long: MANFGCEDLRSQDGESFLYFAYGSNLLTERIHLRNPSAVFYSVARLQDFKLDFGNPQGKTSETWHGGIATIFESPGDEVWGVVWKMNKSNLSSLDKQEGVKSGMYVPIEVTVSTQEGKEITCRSYQMTNYESVPPSPQYKKVICMGAKENGLPLEYQKKLNSIEPNDYKGKVSEEIEDIIKKGEAKTH.

A substrate-binding site is contributed by 19-22 (YFAY). Glutamate 98 functions as the Proton acceptor in the catalytic mechanism. Residue serine 173 is modified to Phosphoserine.

It belongs to the gamma-glutamylcyclotransferase family. In terms of assembly, homodimer.

It catalyses the reaction an alpha-(gamma-L-glutamyl)-L-amino acid = 5-oxo-L-proline + an L-alpha-amino acid. Its function is as follows. Catalyzes the formation of 5-oxoproline from gamma-glutamyl dipeptides and may play a significant role in glutathione homeostasis. Induces release of cytochrome c from mitochondria with resultant induction of apoptosis. The sequence is that of Gamma-glutamylcyclotransferase (GGCT) from Bos taurus (Bovine).